The following is a 348-amino-acid chain: N-(sulfonatooxy)prop-2-enimidothioate sulfolyase (348 aa).

7 Kelch repeats span residues 1–33, 34–85, 87–133, 139–194, 209–254, 259–314, and 322–348; these read MARTLQGEWMKVEQKGGQVPAPRSSHGIAVIGD, KLYC…VAVG, KLYV…FHSM, HVYV…VVQG, KIPT…FAHA, YIII…ASTT, and GLLVHGGKLMTNERTDEMYFFAVNSST. A (Z)-N-(sulfonatooxy)alkanimidothioate-binding residues include Glu-46, Arg-94, Thr-129, Phe-130, and Arg-157. Arg-94 functions as the Proton donor in the catalytic mechanism. Catalysis depends on Arg-157, which acts as the Proton donor. Glu-220 functions as the Proton acceptor in the catalytic mechanism. Glu-266 serves as a coordination point for Fe(2+). Position 269 (Arg-269) interacts with a (Z)-N-(sulfonatooxy)alkanimidothioate. Positions 270 and 274 each coordinate Fe(2+). Positions 309 and 310 each coordinate a (Z)-N-(sulfonatooxy)alkanimidothioate.

Homodimer. The cofactor is Fe(2+). In terms of tissue distribution, expressed constitutively in roots, stems, leaves, flowers, siliques and seedlings.

It catalyses the reaction (Z)-N-(sulfonatooxy)prop-2-enimidothioate = allyl thiocyanate + sulfate. The enzyme catalyses (Z)-N-(sulfonatooxy)prop-2-enimidothioate = 2-(thiiran-2-yl)acetonitrile + sulfate. The catalysed reaction is (Z)-N-(sulfonatooxy)prop-2-enimidothioate = allyl isothiocyanate + sulfate. It carries out the reaction (Z)-phenyl-N-(sulfonatooxy)methanimidothioate = phenylacetonitrile + sulfur + sulfate. It catalyses the reaction glucoerucin + H2O = (Z)-4-methylsulfanylbutyl-N-(sulfonatooxy)methanimidothioate + D-glucose. The enzyme catalyses (Z)-4-methylsulfanylbutyl-N-(sulfonatooxy)methanimidothioate = 5-(methylsulfanyl)pentanenitrile + sulfur + sulfate + H(+). Stimulated by the presence of Fe(2+) leading to an increase formation of both thiocyanate and epithionitrile with allylglucosinolate as substrate in the presence of myrosinase. Repressed by EDTA. Functionally, specifier protein that contributes to constitutive and herbivore-induced simple nitrile formation. Catalyzes allylthiocyanate and corresponding epithionitrile formation from allylglucosinolate in the presence of myrosinase. Also converts aliphatic glucosinolates, such as indol-3-ylmethylglucosinolate, 4-methylsulfinylbutylglucosinolate, 4-methylthiobutyl- and benzylisothiocyanate, to simple nitriles. The sequence is that of N-(sulfonatooxy)prop-2-enimidothioate sulfolyase from Thlaspi arvense (Field penny-cress).